A 308-amino-acid chain; its full sequence is Porphobilinogen deaminase (308 aa).

C241 carries the post-translational modification S-(dipyrrolylmethanemethyl)cysteine.

The protein belongs to the HMBS family. In terms of assembly, monomer. Dipyrromethane serves as cofactor.

It catalyses the reaction 4 porphobilinogen + H2O = hydroxymethylbilane + 4 NH4(+). The protein operates within porphyrin-containing compound metabolism; protoporphyrin-IX biosynthesis; coproporphyrinogen-III from 5-aminolevulinate: step 2/4. In terms of biological role, tetrapolymerization of the monopyrrole PBG into the hydroxymethylbilane pre-uroporphyrinogen in several discrete steps. This Staphylococcus aureus (strain Newman) protein is Porphobilinogen deaminase.